We begin with the raw amino-acid sequence, 202 residues long: Nucleoside triphosphate pyrophosphatase (202 aa).

Asp-79 acts as the Proton acceptor in catalysis.

Belongs to the Maf family. A divalent metal cation is required as a cofactor.

The protein resides in the cytoplasm. The catalysed reaction is a ribonucleoside 5'-triphosphate + H2O = a ribonucleoside 5'-phosphate + diphosphate + H(+). It carries out the reaction a 2'-deoxyribonucleoside 5'-triphosphate + H2O = a 2'-deoxyribonucleoside 5'-phosphate + diphosphate + H(+). Functionally, nucleoside triphosphate pyrophosphatase. May have a dual role in cell division arrest and in preventing the incorporation of modified nucleotides into cellular nucleic acids. The chain is Nucleoside triphosphate pyrophosphatase from Bradyrhizobium diazoefficiens (strain JCM 10833 / BCRC 13528 / IAM 13628 / NBRC 14792 / USDA 110).